The primary structure comprises 94 residues: Small ribosomal subunit protein eS24 (94 aa).

The protein belongs to the eukaryotic ribosomal protein eS24 family.

The protein is Small ribosomal subunit protein eS24 of Nanoarchaeum equitans (strain Kin4-M).